The chain runs to 142 residues: SLSDKDKADVKIAWAKISPRADEIGAEALGRMLTVYPQTKTYFAHWADLSPGSGPVKHGKKVIMGAIGDAVTKFDDLLGGLASLSELHASKLRVDPSNFKILANCITVVIMFYLPGDFPPEVHASVDKFFQNLALALGQKYR.

Ser1 bears the N-acetylserine mark. One can recognise a Globin domain in the interval 1-142 (SLSDKDKADV…LALALGQKYR (142 aa)). His58 lines the O2 pocket. His88 is a heme b binding site.

The protein belongs to the globin family. In terms of assembly, heterotetramer of two alpha chains and two beta chains. As to expression, red blood cells.

Functionally, involved in oxygen transport from gills to the various peripheral tissues. This chain is Hemoglobin subunit alpha (hba), found in Catostomus clarkii (Desert sucker).